Consider the following 223-residue polypeptide: N-(5'-phosphoribosyl)anthranilate isomerase (223 aa).

Belongs to the TrpF family.

It catalyses the reaction N-(5-phospho-beta-D-ribosyl)anthranilate = 1-(2-carboxyphenylamino)-1-deoxy-D-ribulose 5-phosphate. It participates in amino-acid biosynthesis; L-tryptophan biosynthesis; L-tryptophan from chorismate: step 3/5. In Moorella thermoacetica (strain ATCC 39073 / JCM 9320), this protein is N-(5'-phosphoribosyl)anthranilate isomerase.